Here is a 66-residue protein sequence, read N- to C-terminus: Large ribosomal subunit protein uL29 (66 aa).

The protein belongs to the universal ribosomal protein uL29 family.

The sequence is that of Large ribosomal subunit protein uL29 from Nitrosococcus oceani (strain ATCC 19707 / BCRC 17464 / JCM 30415 / NCIMB 11848 / C-107).